A 320-amino-acid polypeptide reads, in one-letter code: ADP/ATP translocase 4 (320 aa).

Topologically, residues 1–20 are mitochondrial intermembrane; sequence MSNESSKKQSSKKALFDPVS. One copy of the Solcar 1 repeat lies at 19–111; that stretch reads VSFSKDLLAG…FAFKDKYKEL (93 aa). A helical membrane pass occupies residues 21 to 50; sequence FSKDLLAGGVAAAVSKTAVAPIERVKLLLQ. The Mitochondrial matrix segment spans residues 51–87; sequence VQASSKQISPEARYKGMLDCLVRIPREQGFLSYWRGN. A helical transmembrane segment spans residues 88 to 112; it reads LANVIRYFPTQALNFAFKDKYKELF. Arginine 93 and lysine 105 together coordinate ADP. The Mitochondrial intermembrane portion of the chain corresponds to 113–122; the sequence is MSGVNKEKQF. The helical transmembrane segment at 123 to 143 threads the bilayer; the sequence is WRWFLANLASGGAAGATSLCV. 2 Solcar repeats span residues 124–214 and 221–308; these read RWFL…VKGL and TPFL…IKEF. The Mitochondrial matrix portion of the chain corresponds to 144-191; the sequence is VYPLDFARTRLGVDIGKGPEQRQFTGLGDCIMKIAKSDGLIGLYQGFG. Residues 192 to 212 form a helical membrane-spanning segment; that stretch reads VSVQGIIVYRASYFGAYDTVK. The Mitochondrial intermembrane portion of the chain corresponds to 213–223; it reads GLLPKPKETPF. A helical transmembrane segment spans residues 224–244; it reads LVSFIIAQIVTTCSGILSYPF. At 245 to 284 the chain is on the mitochondrial matrix side; the sequence is DTVRRRMMMQSGESDRQYKGTIDCFLKIYRHEGVPAFFRG. Arginine 248 is an ADP binding site. An important for transport activity region spans residues 248–253; sequence RRRMMM. Positions 248 to 253 match the Nucleotide carrier signature motif motif; the sequence is RRRMMM. The helical transmembrane segment at 285–302 threads the bilayer; that stretch reads AFSNILRGTGGALVLVLY. Residues 303 to 320 lie on the Mitochondrial intermembrane side of the membrane; the sequence is DKIKEFLNIDVGGSSSGD.

This sequence belongs to the mitochondrial carrier (TC 2.A.29) family. As to quaternary structure, monomer. As to expression, specifically expressed in undifferentiated embryonic stem cells and germ cells. Expression is down-regulated after embryonic stem cells differentiation. In adults, only expressed in developing gametes in testis. In testis, expressed at higher level in spermatocytes. Expression is probably associated with entry of the male germ cells into meiosis. Expressed at very low level in Sertoli cells.

It is found in the mitochondrion inner membrane. The protein localises to the membrane. The protein resides in the cell projection. Its subcellular location is the cilium. It localises to the flagellum membrane. It carries out the reaction ADP(in) + ATP(out) = ADP(out) + ATP(in). The enzyme catalyses dATP(out) + ADP(in) = dATP(in) + ADP(out). It catalyses the reaction dADP(in) + ADP(out) = dADP(out) + ADP(in). The catalysed reaction is H(+)(in) = H(+)(out). The matrix-open state (m-state) is inhibited by the membrane-permeable bongkrekic acid (BKA). The cytoplasmic-open state (c-state) is inhibited by the membrane-impermeable toxic inhibitor carboxyatractyloside (CATR). Proton transporter activity is inhibited by ADP:ATP antiporter activity. Its function is as follows. ADP:ATP antiporter that mediates import of ADP into the mitochondrial matrix for ATP synthesis, and export of ATP out to fuel the cell. Cycles between the cytoplasmic-open state (c-state) and the matrix-open state (m-state): operates by the alternating access mechanism with a single substrate-binding site intermittently exposed to either the cytosolic (c-state) or matrix (m-state) side of the inner mitochondrial membrane. Specifically required during spermatogenesis, probably to mediate ADP:ATP exchange in spermatocytes. Large ATP supplies from mitochondria may be critical for normal progression of spermatogenesis during early stages of meiotic prophase I, including DNA double-strand break repair and chromosomal synapsis. In addition to its ADP:ATP antiporter activity, also involved in mitochondrial uncoupling and mitochondrial permeability transition pore (mPTP) activity. Plays a role in mitochondrial uncoupling by acting as a proton transporter: proton transport uncouples the proton flows via the electron transport chain and ATP synthase to reduce the efficiency of ATP production and cause mitochondrial thermogenesis. Proton transporter activity is inhibited by ADP:ATP antiporter activity, suggesting that SLC25A31/ANT4 acts as a master regulator of mitochondrial energy output by maintaining a delicate balance between ATP production (ADP:ATP antiporter activity) and thermogenesis (proton transporter activity). Proton transporter activity requires free fatty acids as cofactor, but does not transport it. Among nucleotides, may also exchange ADP for dATP and dADP. Also plays a key role in mPTP opening, a non-specific pore that enables free passage of the mitochondrial membranes to solutes of up to 1.5 kDa, and which contributes to cell death. It is however unclear if SLC25A31/ANT4 constitutes a pore-forming component of mPTP or regulates it. In Mus musculus (Mouse), this protein is ADP/ATP translocase 4.